A 297-amino-acid polypeptide reads, in one-letter code: Probable terminal-alkyne amino-acid exporter (297 aa).

9 consecutive transmembrane segments (helical) span residues Ala6–Val26, Gly32–Ala52, Leu65–Trp85, Ala95–Gly115, Ile123–Ala143, Trp150–Leu170, Val178–Val198, Thr212–Ala232, and Val249–Gly269. EamA domains are found at residues Ala6 to Ala137 and Trp150 to Asn281.

It belongs to the EamA transporter family.

The protein localises to the cell membrane. In terms of biological role, probably involved in the export of terminal alkyne-containing amino acids, namely L-propargylglycine (Pra) and L-beta-ethynylserine, that are antibiotics synthesized by enzymes encoded in the same gene cluster. In Streptantibioticus cattleyicolor (strain ATCC 35852 / DSM 46488 / JCM 4925 / NBRC 14057 / NRRL 8057) (Streptomyces cattleya), this protein is Probable terminal-alkyne amino-acid exporter.